Reading from the N-terminus, the 82-residue chain is Small ribosomal subunit protein bS16 (82 aa).

It belongs to the bacterial ribosomal protein bS16 family.

This is Small ribosomal subunit protein bS16 from Edwardsiella ictaluri (strain 93-146).